Here is a 204-residue protein sequence, read N- to C-terminus: Quinol oxidase subunit 3 (204 aa).

6 helical membrane-spanning segments follow: residues 27–47 (FWIF…TFFV), 66–86 (LVMI…IAVH), 95–115 (GVVI…GCEI), 118–138 (FVHY…SGFF), 140–160 (LLGT…GILI), and 184–204 (FLDV…LGGL).

This sequence belongs to the cytochrome c oxidase subunit 3 family.

The protein localises to the cell membrane. The enzyme catalyses 2 a quinol + O2 = 2 a quinone + 2 H2O. Its function is as follows. Catalyzes quinol oxidation with the concomitant reduction of oxygen to water. Major component for energy conversion during vegetative growth. This is Quinol oxidase subunit 3 (qoxC) from Bacillus subtilis (strain 168).